Reading from the N-terminus, the 201-residue chain is NADH-quinone oxidoreductase subunit B 1 (201 aa).

The [4Fe-4S] cluster site is built by cysteine 80, cysteine 81, cysteine 145, and cysteine 175.

The protein belongs to the complex I 20 kDa subunit family. In terms of assembly, NDH-1 is composed of 14 different subunits. Subunits NuoB, C, D, E, F, and G constitute the peripheral sector of the complex. Requires [4Fe-4S] cluster as cofactor.

The protein localises to the cell inner membrane. It catalyses the reaction a quinone + NADH + 5 H(+)(in) = a quinol + NAD(+) + 4 H(+)(out). Functionally, NDH-1 shuttles electrons from NADH, via FMN and iron-sulfur (Fe-S) centers, to quinones in the respiratory chain. The immediate electron acceptor for the enzyme in this species is believed to be ubiquinone. Couples the redox reaction to proton translocation (for every two electrons transferred, four hydrogen ions are translocated across the cytoplasmic membrane), and thus conserves the redox energy in a proton gradient. The protein is NADH-quinone oxidoreductase subunit B 1 of Rhodopseudomonas palustris (strain BisB18).